The following is a 499-amino-acid chain: MFKIDEEKCKKCRMCVKECPVHAVYYEKKDKGAIVEITEKCVECGICKRVCKFGAIENDAPLESVITCSSCPIQCKVPLGETGACTRYRNVGGKLVRDRELVVEALEQKEAADNIKKPIITAVGAGTNYPCSKPAPHIVSECRDGVDVVTVVTEAPLSYSGLVIKLDTNTYIGEEGDPVYRDGKVVGMVNTEEYGSKMIAIGGANRLTGDNGFATARTIVELANGEEVELKVNKKIVLKLKAGVAPVIDGVEESIMRIGCGSATVGLFAKRMKDAVDECIVIDHHVIGLCSEHLAGEAVGMTWSGIIPNATKSSRGRYFGGHGSGIGGTSLETPRDAIKGADMSIAKAGMQVMVVNTTGEIYALFELKADGSFDEIPMTEAALGVALAIQDNCQRSMTSILYTGGTGGSARGGVCTHPVKITEAVHEQKAVLTIGGAPAFVYPGGGINFMVDTQKVVNKAFTWVPTPATVAPVEYTMTVADYEAMGGHMDQIKDVSEYK.

4Fe-4S ferredoxin-type domains follow at residues 1–29 and 31–61; these read MFKI…YEKK and KGAI…NDAP. [4Fe-4S] cluster contacts are provided by C9, C12, C15, C19, C41, C44, C47, and C51.

Homotetramer. It depends on an oxidized flavin as a cofactor. [2Fe-2S] cluster is required as a cofactor. Requires [4Fe-4S] cluster as cofactor.

The catalysed reaction is 1,4,5,6-tetrahydro-6-oxonicotinate + oxidized 2[4Fe-4S]-[ferredoxin] = 6-hydroxynicotinate + reduced 2[4Fe-4S]-[ferredoxin] + 2 H(+). It functions in the pathway cofactor degradation; nicotinate degradation; propanoate and pyruvate from 6-hydroxynicotinate: step 1/8. Catalyzes the reversible reduction of 6-hydroxynicotinate to 6-oxo-1,4,5,6-tetrahydronicotinate. This Eubacterium barkeri (Clostridium barkeri) protein is 6-hydroxynicotinate reductase.